Here is a 358-residue protein sequence, read N- to C-terminus: 3-dehydroquinate synthase (358 aa).

NAD(+)-binding positions include 70 to 75 (DGEAHK), 104 to 108 (GVIGD), 128 to 129 (TT), Lys141, and Lys150. Residues Glu183, His246, and His263 each contribute to the Zn(2+) site.

The protein belongs to the sugar phosphate cyclases superfamily. Dehydroquinate synthase family. NAD(+) is required as a cofactor. Co(2+) serves as cofactor. The cofactor is Zn(2+).

The protein localises to the cytoplasm. It carries out the reaction 7-phospho-2-dehydro-3-deoxy-D-arabino-heptonate = 3-dehydroquinate + phosphate. Its pathway is metabolic intermediate biosynthesis; chorismate biosynthesis; chorismate from D-erythrose 4-phosphate and phosphoenolpyruvate: step 2/7. In terms of biological role, catalyzes the conversion of 3-deoxy-D-arabino-heptulosonate 7-phosphate (DAHP) to dehydroquinate (DHQ). This is 3-dehydroquinate synthase from Bordetella bronchiseptica (strain ATCC BAA-588 / NCTC 13252 / RB50) (Alcaligenes bronchisepticus).